Reading from the N-terminus, the 501-residue chain is Cytochrome P450 monooxygenase notH (501 aa).

The helical transmembrane segment at 11-31 (LGLESVGWVLGLLTTSILYLF) threads the bilayer. N298 is a glycosylation site (N-linked (GlcNAc...) asparagine). C442 is a binding site for heme.

Belongs to the cytochrome P450 family. It depends on heme as a cofactor.

It is found in the membrane. It participates in alkaloid biosynthesis. Functionally, cytochrome P450 monooxygenase; part of the gene cluster that mediates the biosynthesis of notoamide, a fungal indole alkaloid that belongs to a family of natural products containing a characteristic bicyclo[2.2.2]diazaoctane core. The first step of notoamide biosynthesis involves coupling of L-proline and L-tryptophan by the bimodular NRPS notE, to produce cyclo-L-tryptophan-L-proline called brevianamide F. The reverse prenyltransferase notF then acts as a deoxybrevianamide E synthase and converts brevianamide F to deoxybrevianamide E via reverse prenylation at C-2 of the indole ring leading to the bicyclo[2.2.2]diazaoctane core. Deoxybrevianamide E is further hydroxylated at C-6 of the indole ring, likely catalyzed by the cytochrome P450 monooxygenase notG, to yield 6-hydroxy-deoxybrevianamide E. 6-hydroxy-deoxybrevianamide E is a specific substrate of the prenyltransferase notC for normal prenylation at C-7 to produce 6-hydroxy-7-prenyl-deoxybrevianamide, also called notoamide S. As the proposed pivotal branching point in notoamide biosynthesis, notoamide S can be diverted to notoamide E through an oxidative pyran ring closure putatively catalyzed by either notH cytochrome P450 monooxygenase or the notD FAD-linked oxidoreductase. This step would be followed by an indole 2,3-epoxidation-initiated pinacol-like rearrangement catalyzed by the notB FAD-dependent monooxygenase leading to the formation of notoamide C and notoamide D. On the other hand notoamide S is converted to notoamide T by notH (or notD), a bifunctional oxidase that also functions as the intramolecular Diels-Alderase responsible for generation of (+)-notoamide T. To generate antipodal (-)-notoaminide T, notH' (or notD') in Aspergillus versicolor is expected to catalyze a Diels-Alder reaction leading to the opposite stereochemistry. The remaining oxidoreductase notD (or notH) likely catalyzes the oxidative pyran ring formation to yield (+)-stephacidin A. The FAD-dependent monooxygenase notI is highly similar to notB and is predicted to catalyze a similar conversion from (+)-stephacidin A to (-)-notoamide B via the 2,3-epoxidation of (+)-stephacidin A followed by a pinacol-type rearrangement. Finally, it remains unclear which enzyme could be responsible for the final hydroxylation steps leading to notoamide A and sclerotiamide. This is Cytochrome P450 monooxygenase notH from Aspergillus sp. (strain MF297-2).